The sequence spans 131 residues: Small ribosomal subunit protein uS11 (131 aa).

This sequence belongs to the universal ribosomal protein uS11 family. Part of the 30S ribosomal subunit. Interacts with proteins S7 and S18. Binds to IF-3.

Its function is as follows. Located on the platform of the 30S subunit, it bridges several disparate RNA helices of the 16S rRNA. Forms part of the Shine-Dalgarno cleft in the 70S ribosome. This is Small ribosomal subunit protein uS11 from Helicobacter pylori (strain ATCC 700392 / 26695) (Campylobacter pylori).